We begin with the raw amino-acid sequence, 602 residues long: Elongation factor 4 (602 aa).

The tr-type G domain maps to 7-189 (KFIRNFSIIA…QLVVAIPPPV (183 aa)). Residues 19–24 (DHGKST) and 136–139 (NKID) contribute to the GTP site.

The protein belongs to the TRAFAC class translation factor GTPase superfamily. Classic translation factor GTPase family. LepA subfamily.

It is found in the cell inner membrane. It carries out the reaction GTP + H2O = GDP + phosphate + H(+). Required for accurate and efficient protein synthesis under certain stress conditions. May act as a fidelity factor of the translation reaction, by catalyzing a one-codon backward translocation of tRNAs on improperly translocated ribosomes. Back-translocation proceeds from a post-translocation (POST) complex to a pre-translocation (PRE) complex, thus giving elongation factor G a second chance to translocate the tRNAs correctly. Binds to ribosomes in a GTP-dependent manner. The polypeptide is Elongation factor 4 (Coxiella burnetii (strain RSA 493 / Nine Mile phase I)).